Reading from the N-terminus, the 186-residue chain is Alkyl hydroperoxide reductase AhpD (186 aa).

Catalysis depends on cysteine 132, which acts as the Proton donor. The cysteines at positions 132 and 135 are disulfide-linked. Cysteine 135 (cysteine sulfenic acid (-SOH) intermediate) is an active-site residue.

The protein belongs to the AhpD family.

The enzyme catalyses N(6)-[(R)-dihydrolipoyl]-L-lysyl-[lipoyl-carrier protein] + a hydroperoxide = N(6)-[(R)-lipoyl]-L-lysyl-[lipoyl-carrier protein] + an alcohol + H2O. In terms of biological role, antioxidant protein with alkyl hydroperoxidase activity. Required for the reduction of the AhpC active site cysteine residues and for the regeneration of the AhpC enzyme activity. This chain is Alkyl hydroperoxide reductase AhpD, found in Anaeromyxobacter dehalogenans (strain 2CP-1 / ATCC BAA-258).